The sequence spans 396 residues: Ornithine aminotransferase (396 aa).

Lys-255 carries the post-translational modification N6-(pyridoxal phosphate)lysine.

This sequence belongs to the class-III pyridoxal-phosphate-dependent aminotransferase family. OAT subfamily. It depends on pyridoxal 5'-phosphate as a cofactor.

It is found in the cytoplasm. It catalyses the reaction a 2-oxocarboxylate + L-ornithine = L-glutamate 5-semialdehyde + an L-alpha-amino acid. Its pathway is amino-acid biosynthesis; L-proline biosynthesis; L-glutamate 5-semialdehyde from L-ornithine: step 1/1. Catalyzes the interconversion of ornithine to glutamate semialdehyde. This Bacillus anthracis (strain A0248) protein is Ornithine aminotransferase.